Here is a 329-residue protein sequence, read N- to C-terminus: Quinate dehydrogenase (329 aa).

It catalyses the reaction L-quinate + NAD(+) = 3-dehydroquinate + NADH + H(+). It participates in aromatic compound metabolism; 3,4-dihydroxybenzoate biosynthesis; 3-dehydroquinate from D-quinate (NAD(+) route): step 1/1. The chain is Quinate dehydrogenase (qutB) from Emericella nidulans (strain FGSC A4 / ATCC 38163 / CBS 112.46 / NRRL 194 / M139) (Aspergillus nidulans).